Reading from the N-terminus, the 599-residue chain is Nucleoporin p58/p45 (599 aa).

5 tandem repeats follow at residues F7–G8, F30–G31, F44–G45, F63–G64, and F68–G69. A 14 X 2 AA repeats of F-G region spans residues F7–G579. Positions N213 to L247 are disordered. Residues S225 to N246 show a composition bias toward basic and acidic residues. 2 coiled-coil regions span residues E256–S276 and E314–T381. Phosphothreonine is present on T331. 9 repeat units span residues F488–G489, F492–G493, F513–G514, F519–G520, F529–G530, F531–G532, F545–G546, F568–G569, and F578–G579. Residues G579–R599 are disordered.

It belongs to the NUP58 family. Component of the p62 complex, a complex at least composed of NUP62, NUP54, and NUP58. Interacts with NUTF2. Interacts with SRP1-alpha and Importin p97 proteins when they are together, but not with SRP1-alpha protein alone. Post-translationally, O-glycosylated.

The protein resides in the nucleus. It localises to the nuclear pore complex. Its subcellular location is the nucleus membrane. Functionally, component of the nuclear pore complex, a complex required for the trafficking across the nuclear membrane. This Homo sapiens (Human) protein is Nucleoporin p58/p45.